The primary structure comprises 481 residues: Matrix metalloproteinase-20 (481 aa).

Positions 1 to 20 (MLPASGLAVLLVTALKFSTA) are cleaved as a signal peptide. Positions 21–105 (APSLPAASPR…PRCGVPDVAN (85 aa)) are excised as a propeptide. Asn64 carries an N-linked (GlcNAc...) asparagine glycan. Positions 96–103 (PRCGVPDV) match the Cysteine switch motif. Residue Cys98 participates in Zn(2+) binding. Positions 162, 163, and 164 each coordinate Ca(2+). The Zn(2+) site is built by His174 and Asp176. Ca(2+) is bound by residues Asp181, Gly182, Arg184, and Thr186. Position 189 (His189) interacts with Zn(2+). The Ca(2+) site is built by Glu195, Gly196, Gly198, and Asp200. Residue His202 participates in Zn(2+) binding. 2 residues coordinate Ca(2+): Asp204 and Glu207. His224 is a Zn(2+) binding site. Residue Glu225 is part of the active site. Positions 228 and 234 each coordinate Zn(2+). Hemopexin repeat units follow at residues 291–341 (PDLC…FPQL), 342–387 (MSNV…GFPR), 389–437 (VQRI…FSGV), and 438–481 (NGQI…WIGC). Residues Cys294 and Cys481 are joined by a disulfide bond. N-linked (GlcNAc...) asparagine glycosylation occurs at Asn297.

The protein belongs to the peptidase M10A family. Zn(2+) is required as a cofactor. Ca(2+) serves as cofactor. Post-translationally, autoactivates at least at the 105-Asn-|-Tyr-106 site. Expressed in the enamel organ.

It localises to the secreted. Its subcellular location is the extracellular space. The protein localises to the extracellular matrix. In terms of biological role, degrades amelogenin, the major protein component of the enamel matrix and two of the macromolecules characterizing the cartilage extracellular matrix: aggrecan and the cartilage oligomeric matrix protein (COMP). May play a central role in tooth enamel formation. Cleaves aggrecan at the '360-Ser-|-Phe-361' site. The protein is Matrix metalloproteinase-20 (MMP20) of Bos taurus (Bovine).